The sequence spans 167 residues: uncharacterized protein (167 aa).

The protein to A.aeolicus aq_328.

This is an uncharacterized protein from Aquifex aeolicus (strain VF5).